Consider the following 400-residue polypeptide: Enoyl-[acyl-carrier-protein] reductase [NADH] 1 (400 aa).

NAD(+)-binding positions include 48–53, 74–75, 111–112, and 139–140; these read GASSGY, FE, DA, and LA. Tyr-225 contributes to the substrate binding site. Tyr-235 (proton donor) is an active-site residue. NAD(+) is bound by residues Lys-244 and 273–275; that span reads VVT.

It belongs to the TER reductase family. Monomer.

The enzyme catalyses a 2,3-saturated acyl-[ACP] + NAD(+) = a (2E)-enoyl-[ACP] + NADH + H(+). It participates in lipid metabolism; fatty acid biosynthesis. Involved in the final reduction of the elongation cycle of fatty acid synthesis (FAS II). Catalyzes the reduction of a carbon-carbon double bond in an enoyl moiety that is covalently linked to an acyl carrier protein (ACP). The protein is Enoyl-[acyl-carrier-protein] reductase [NADH] 1 of Vibrio vulnificus (strain CMCP6).